Reading from the N-terminus, the 305-residue chain is Aspartate carbamoyltransferase catalytic subunit (305 aa).

Residues R53 and T54 each contribute to the carbamoyl phosphate site. K82 contributes to the L-aspartate binding site. Carbamoyl phosphate-binding residues include R103, H131, and Q134. L-aspartate is bound by residues R164 and R226. Residues L265 and P266 each contribute to the carbamoyl phosphate site.

Belongs to the aspartate/ornithine carbamoyltransferase superfamily. ATCase family. As to quaternary structure, heterooligomer of catalytic and regulatory chains.

It carries out the reaction carbamoyl phosphate + L-aspartate = N-carbamoyl-L-aspartate + phosphate + H(+). It participates in pyrimidine metabolism; UMP biosynthesis via de novo pathway; (S)-dihydroorotate from bicarbonate: step 2/3. Its function is as follows. Catalyzes the condensation of carbamoyl phosphate and aspartate to form carbamoyl aspartate and inorganic phosphate, the committed step in the de novo pyrimidine nucleotide biosynthesis pathway. The protein is Aspartate carbamoyltransferase catalytic subunit of Ignicoccus hospitalis (strain KIN4/I / DSM 18386 / JCM 14125).